We begin with the raw amino-acid sequence, 212 residues long: Protein-L-isoaspartate O-methyltransferase (212 aa).

Serine 60 is a catalytic residue.

This sequence belongs to the methyltransferase superfamily. L-isoaspartyl/D-aspartyl protein methyltransferase family.

It localises to the cytoplasm. The catalysed reaction is [protein]-L-isoaspartate + S-adenosyl-L-methionine = [protein]-L-isoaspartate alpha-methyl ester + S-adenosyl-L-homocysteine. Its function is as follows. Catalyzes the methyl esterification of L-isoaspartyl residues in peptides and proteins that result from spontaneous decomposition of normal L-aspartyl and L-asparaginyl residues. It plays a role in the repair and/or degradation of damaged proteins. The sequence is that of Protein-L-isoaspartate O-methyltransferase from Pseudomonas entomophila (strain L48).